Consider the following 128-residue polypeptide: Holo-[acyl-carrier-protein] synthase (128 aa).

Mg(2+) is bound by residues Asp-8 and Glu-60.

It belongs to the P-Pant transferase superfamily. AcpS family. Mg(2+) is required as a cofactor.

The protein localises to the cytoplasm. It catalyses the reaction apo-[ACP] + CoA = holo-[ACP] + adenosine 3',5'-bisphosphate + H(+). Its function is as follows. Transfers the 4'-phosphopantetheine moiety from coenzyme A to a Ser of acyl-carrier-protein. This chain is Holo-[acyl-carrier-protein] synthase, found in Anaeromyxobacter dehalogenans (strain 2CP-1 / ATCC BAA-258).